Here is a 172-residue protein sequence, read N- to C-terminus: Lectin (172 aa).

Positions 1–20 (MVWCLADLRAYVLVLLVISG) are cleaved as a signal peptide. One can recognise a C-type lectin domain in the interval 36–172 (DCTPGWDCHF…ICKYTTPCRY (137 aa)). Intrachain disulfides connect Cys-65–Cys-164 and Cys-140–Cys-156. Asn-93 carries N-linked (GlcNAc...) asparagine glycosylation.

In terms of assembly, heterodimer. As to expression, anterior part of oviduct.

The protein resides in the secreted. In terms of biological role, may be involved in protection of eggs and embryos against microorganisms. Calcium-dependent lectin with specificity to D-glucose and D-glucosamine. Can agglutinate microorganisms in vivo. In Pleurodeles waltl (Iberian ribbed newt), this protein is Lectin (LEC).